Consider the following 123-residue polypeptide: PTS-dependent dihydroxyacetone kinase, phosphotransferase subunit DhaM (123 aa).

A PTS EIIA type-4 domain is found at 2 to 123 (TYGIVIVSHS…EQLEKMLIEK (122 aa)). Catalysis depends on His10, which acts as the Tele-phosphohistidine intermediate; for EIIA activity.

Homodimer. The dihydroxyacetone kinase complex is composed of a homodimer of DhaM, a homodimer of DhaK and the subunit DhaL.

It carries out the reaction dihydroxyacetone + phosphoenolpyruvate = dihydroxyacetone phosphate + pyruvate. The protein operates within polyol metabolism; glycerol degradation. Component of the dihydroxyacetone kinase complex, which is responsible for the phosphoenolpyruvate (PEP)-dependent phosphorylation of dihydroxyacetone. DhaM serves as the phosphoryl donor. Is phosphorylated by phosphoenolpyruvate in an EI- and HPr-dependent reaction, and a phosphorelay system on histidine residues finally leads to phosphoryl transfer to DhaL and dihydroxyacetone. This chain is PTS-dependent dihydroxyacetone kinase, phosphotransferase subunit DhaM, found in Lactococcus lactis subsp. lactis (strain IL1403) (Streptococcus lactis).